Here is a 370-residue protein sequence, read N- to C-terminus: Nociceptin receptor (370 aa).

Over 1-48 (MESLFPAPFWEVLYGSPLQGNLSLLSPNHSLLPPHLLLNASHGAFLPL) the chain is Extracellular. 3 N-linked (GlcNAc...) asparagine glycosylation sites follow: Asn21, Asn28, and Asn39. The helical transmembrane segment at 49-74 (GLKVTIVGLYLAVCVGGLLGNCLVMY) threads the bilayer. Topologically, residues 75–87 (VILRHTKMKTATN) are cytoplasmic. The helical transmembrane segment at 88–109 (IYIFNLALADTAVLLTLPFQGT) threads the bilayer. Residues 110-124 (DVLLGFWPFGNALCK) lie on the Extracellular side of the membrane. An intrachain disulfide couples Cys123 to Cys200. The helical transmembrane segment at 125–146 (AVIAIDYYNMFTSAFTLTAMSV) threads the bilayer. Residues 147 to 165 (DRYVAICHPIRALDVRTSS) are Cytoplasmic-facing. A helical transmembrane segment spans residues 166-188 (KAQAVNVAIWALASIVGVPVAIM). The Extracellular portion of the chain corresponds to 189-211 (GSAQVEDEEIECLVEIPAPQDYW). A helical membrane pass occupies residues 212–236 (GPVFAVCIFLFSFVIPVLIISVCYS). At 237–264 (LMVRRLRGVRLLSGSREKDRNLRRITRL) the chain is on the cytoplasmic side. A helical membrane pass occupies residues 265-285 (VLVVVAVFVGCWTPVQVFVLV). Topologically, residues 286–300 (QGLGVQPGSETAVAV) are extracellular. A helical transmembrane segment spans residues 301 to 322 (LRFCTALGYVNSCLNPILYAFL). Topologically, residues 323-370 (DENFKACFRKFCCAPTRRREMQVSDRVRSIAKDVALACKTSETVPRPA) are cytoplasmic. A lipid anchor (S-palmitoyl cysteine) is attached at Cys334.

This sequence belongs to the G-protein coupled receptor 1 family. Post-translationally, phosphorylation at Ser-363 requires GRK3. In terms of tissue distribution, detected in brain cortex, stomach, ileum, jejunum and colon.

Its subcellular location is the cell membrane. It is found in the cytoplasmic vesicle. G-protein coupled opioid receptor that functions as a receptor for the endogenous neuropeptide nociceptin. Ligand binding causes a conformation change that triggers signaling via guanine nucleotide-binding proteins (G proteins) and modulates the activity of down-stream effectors. Signaling via G proteins mediates inhibition of adenylate cyclase activity and calcium channel activity. Arrestins modulate signaling via G proteins and mediate the activation of alternative signaling pathways that lead to the activation of MAP kinases. Plays a role in modulating nociception and the perception of pain. Plays a role in the regulation of locomotor activity by the neuropeptide nociceptin. The chain is Nociceptin receptor (OPRL1) from Sus scrofa (Pig).